The sequence spans 227 residues: UPF0173 metal-dependent hydrolase YtkL (227 aa).

This sequence belongs to the UPF0173 family.

The chain is UPF0173 metal-dependent hydrolase YtkL (ytkL) from Bacillus subtilis (strain 168).